Here is a 114-residue protein sequence, read N- to C-terminus: uncharacterized protein (114 aa).

A run of 2 helical transmembrane segments spans residues 58–78 (CLLGVGAVGTFISTFPQFFLL) and 94–114 (SISYAASAIFSFSIFFFFCLA).

It is found in the membrane. This is an uncharacterized protein from Saccharomyces cerevisiae (strain ATCC 204508 / S288c) (Baker's yeast).